Consider the following 396-residue polypeptide: Phosphoglycerate kinase (396 aa).

Substrate is bound by residues 22-24 (DLN), arginine 37, 60-63 (HFGR), arginine 118, and arginine 151. ATP-binding positions include lysine 201, glutamate 323, and 353–356 (GGDT).

It belongs to the phosphoglycerate kinase family. In terms of assembly, monomer.

The protein localises to the cytoplasm. The enzyme catalyses (2R)-3-phosphoglycerate + ATP = (2R)-3-phospho-glyceroyl phosphate + ADP. It participates in carbohydrate degradation; glycolysis; pyruvate from D-glyceraldehyde 3-phosphate: step 2/5. This Azorhizobium caulinodans (strain ATCC 43989 / DSM 5975 / JCM 20966 / LMG 6465 / NBRC 14845 / NCIMB 13405 / ORS 571) protein is Phosphoglycerate kinase.